The following is a 473-amino-acid chain: tRNA modification GTPase MnmE (473 aa).

The (6S)-5-formyl-5,6,7,8-tetrahydrofolate site is built by R30, E95, and R134. The TrmE-type G domain maps to 230–394 (GVAAVIAGRP…LKSTMAGMVE (165 aa)). Residues 240 to 245 (NAGKST), 259 to 265 (SHMPGTT), and 284 to 287 (DTAG) each bind GTP. Positions 244 and 265 each coordinate Mg(2+). K473 serves as a coordination point for (6S)-5-formyl-5,6,7,8-tetrahydrofolate.

Belongs to the TRAFAC class TrmE-Era-EngA-EngB-Septin-like GTPase superfamily. TrmE GTPase family. In terms of assembly, homodimer. Heterotetramer of two MnmE and two MnmG subunits. Requires K(+) as cofactor.

It localises to the cytoplasm. In terms of biological role, exhibits a very high intrinsic GTPase hydrolysis rate. Involved in the addition of a carboxymethylaminomethyl (cmnm) group at the wobble position (U34) of certain tRNAs, forming tRNA-cmnm(5)s(2)U34. This chain is tRNA modification GTPase MnmE, found in Chlorobium phaeovibrioides (strain DSM 265 / 1930) (Prosthecochloris vibrioformis (strain DSM 265)).